The sequence spans 59 residues: Large ribosomal subunit protein uL30 (59 aa).

This sequence belongs to the universal ribosomal protein uL30 family. As to quaternary structure, part of the 50S ribosomal subunit.

This chain is Large ribosomal subunit protein uL30, found in Haemophilus ducreyi (strain 35000HP / ATCC 700724).